The following is a 196-amino-acid chain: Ribosome maturation factor RimP (196 aa).

A disordered region spans residues 163–196; that stretch reads GLAPSKPTGPAPKRPKPNTNSSSNEPAAKKPRAE.

Belongs to the RimP family.

Its subcellular location is the cytoplasm. In terms of biological role, required for maturation of 30S ribosomal subunits. The sequence is that of Ribosome maturation factor RimP from Stenotrophomonas maltophilia (strain K279a).